The following is a 216-amino-acid chain: Putative flagellar filament outer layer-like protein (216 aa).

The segment at Met1 to Asn22 is disordered. The span at Gln8–Asn22 shows a compositional bias: low complexity.

The protein localises to the periplasmic flagellum. Its subcellular location is the periplasm. Functionally, might be part of the flagella. This chain is Putative flagellar filament outer layer-like protein (flaAL), found in Brachyspira hyodysenteriae (strain ATCC 49526 / WA1).